Here is a 222-residue protein sequence, read N- to C-terminus: Sugar fermentation stimulation protein homolog (222 aa).

It belongs to the SfsA family.

This Thermoplasma acidophilum (strain ATCC 25905 / DSM 1728 / JCM 9062 / NBRC 15155 / AMRC-C165) protein is Sugar fermentation stimulation protein homolog.